A 302-amino-acid polypeptide reads, in one-letter code: Tetrahydromethanopterin S-methyltransferase subunit E (302 aa).

A run of 6 helical transmembrane segments spans residues 3–23 (PLIS…AGAS), 86–106 (PLFA…TFAV), 132–152 (ITPI…VSYL), 155–175 (VVLG…ITIG), 233–253 (PVTG…TTIF), and 259–279 (LGWL…IWNW).

The protein belongs to the MtrE family. As to quaternary structure, the complex is composed of 8 subunits; MtrA, MtrB, MtrC, MtrD, MtrE, MtrF, MtrG and MtrH.

Its subcellular location is the cell membrane. The catalysed reaction is 5-methyl-5,6,7,8-tetrahydromethanopterin + coenzyme M + 2 Na(+)(in) = 5,6,7,8-tetrahydromethanopterin + methyl-coenzyme M + 2 Na(+)(out). Its pathway is one-carbon metabolism; methanogenesis from CO(2); methyl-coenzyme M from 5,10-methylene-5,6,7,8-tetrahydromethanopterin: step 2/2. Functionally, part of a complex that catalyzes the formation of methyl-coenzyme M and tetrahydromethanopterin from coenzyme M and methyl-tetrahydromethanopterin. This is an energy-conserving, sodium-ion translocating step. This Methanosarcina barkeri (strain Fusaro / DSM 804) protein is Tetrahydromethanopterin S-methyltransferase subunit E.